The sequence spans 395 residues: DNA polymerase IV (395 aa).

One can recognise a UmuC domain in the interval 7–187 (FFHVDIDAFF…LPLKDVWGVG (181 aa)). Positions 11 and 105 each coordinate Mg(2+). The active site involves Glu-106.

This sequence belongs to the DNA polymerase type-Y family. As to quaternary structure, monomer. Mg(2+) serves as cofactor.

The protein resides in the cytoplasm. The catalysed reaction is DNA(n) + a 2'-deoxyribonucleoside 5'-triphosphate = DNA(n+1) + diphosphate. Poorly processive, error-prone DNA polymerase involved in untargeted mutagenesis. Copies undamaged DNA at stalled replication forks, which arise in vivo from mismatched or misaligned primer ends. These misaligned primers can be extended by PolIV. Exhibits no 3'-5' exonuclease (proofreading) activity. May be involved in translesional synthesis, in conjunction with the beta clamp from PolIII. The polypeptide is DNA polymerase IV (Treponema denticola (strain ATCC 35405 / DSM 14222 / CIP 103919 / JCM 8153 / KCTC 15104)).